A 338-amino-acid polypeptide reads, in one-letter code: Phenylalanine--tRNA ligase alpha subunit (338 aa).

Residue glutamate 253 coordinates Mg(2+).

The protein belongs to the class-II aminoacyl-tRNA synthetase family. Phe-tRNA synthetase alpha subunit type 1 subfamily. As to quaternary structure, tetramer of two alpha and two beta subunits. Mg(2+) serves as cofactor.

It localises to the cytoplasm. It catalyses the reaction tRNA(Phe) + L-phenylalanine + ATP = L-phenylalanyl-tRNA(Phe) + AMP + diphosphate + H(+). The protein is Phenylalanine--tRNA ligase alpha subunit of Geotalea daltonii (strain DSM 22248 / JCM 15807 / FRC-32) (Geobacter daltonii).